The primary structure comprises 451 residues: MTTSAQRPERVIVVGGQDWDQVVTAARQMSNSSSRAGDAAEHAGERIVVNMGPQHPSTHGVLRLILEIEGETIVEARCGIGYLHTGIEKNLEFRTWTQGVTFVTRMDYLSPFFNETAYCLGVEKLLGVTDDIPERASVIRVMMMELNRISSHLVALATGGMELGAMTAMFLGFRERELILSVFETITGLRMNSAYIRPGGVAADLPEEGLPQIRELLTLLPTRLRDMENLLNENYIWKARTLGVGYLDLTGCMALGITGPVLRSTGLPHDLRKSQPYCGYQTYDFDVITDDRCDSYGRYLIRVKEMRESLRIVEQCVERLERSTGEPVMITDRKLAWPADLKVGPDGLGNSPEHIAKIMGHSMEGLIHHFKLVTEGIRVPPGQVYVAVESPRGELGVHMVSDGGTRPYRVHYRDPSFTNLQAVAAMCEGGMVADAITAVASIDPVMGGVDR.

It belongs to the complex I 49 kDa subunit family. As to quaternary structure, NDH-1 is composed of 14 different subunits. Subunits NuoB, C, D, E, F, and G constitute the peripheral sector of the complex.

The protein localises to the cell membrane. It catalyses the reaction a quinone + NADH + 5 H(+)(in) = a quinol + NAD(+) + 4 H(+)(out). Functionally, NDH-1 shuttles electrons from NADH, via FMN and iron-sulfur (Fe-S) centers, to quinones in the respiratory chain. The immediate electron acceptor for the enzyme in this species is believed to be a menaquinone. Couples the redox reaction to proton translocation (for every two electrons transferred, four hydrogen ions are translocated across the cytoplasmic membrane), and thus conserves the redox energy in a proton gradient. In Mycolicibacterium gilvum (strain PYR-GCK) (Mycobacterium gilvum (strain PYR-GCK)), this protein is NADH-quinone oxidoreductase subunit D.